Reading from the N-terminus, the 495-residue chain is L-arabinose isomerase (495 aa).

Mn(2+)-binding residues include E305, E332, H349, and H448.

Belongs to the arabinose isomerase family. The cofactor is Mn(2+).

The enzyme catalyses beta-L-arabinopyranose = L-ribulose. It participates in carbohydrate degradation; L-arabinose degradation via L-ribulose; D-xylulose 5-phosphate from L-arabinose (bacterial route): step 1/3. In terms of biological role, catalyzes the conversion of L-arabinose to L-ribulose. This Actinobacillus succinogenes (strain ATCC 55618 / DSM 22257 / CCUG 43843 / 130Z) protein is L-arabinose isomerase.